The primary structure comprises 257 residues: MSLKKSPFFELRSGSVDTLLFTVKTTDLDALRAELVKRFEATPEFFADDVVAIDVRRLADGERVALADIRQMLSDVRMRPVGVVALATQGWATEAGLPLLEARDRRAPAAKAADEAEPVAAPAVEAAAAPAAEPTPEPGAASQPAGVQTLVIDRPLRSGQQIYAKGDLVVLAPVSHGAEIIAEGNIHIYAPLRGRALAGVHGNHDARIFCTCLEPELISIAGIYRTTENPLPADVLGKSVQIRLEEEKLMIEPLRLT.

Over residues 123–141 (AVEAAAAPAAEPTPEPGAA) the composition is skewed to low complexity. Residues 123 to 144 (AVEAAAAPAAEPTPEPGAASQP) are disordered.

The protein belongs to the MinC family. In terms of assembly, interacts with MinD and FtsZ.

Its function is as follows. Cell division inhibitor that blocks the formation of polar Z ring septums. Rapidly oscillates between the poles of the cell to destabilize FtsZ filaments that have formed before they mature into polar Z rings. Prevents FtsZ polymerization. The polypeptide is Probable septum site-determining protein MinC (Burkholderia multivorans (strain ATCC 17616 / 249)).